A 720-amino-acid chain; its full sequence is DNA gyrase subunit B (720 aa).

Residues 1–26 (MVDAMPENPAEEPTAASAAPNPEAVP) are compositionally biased toward low complexity. The disordered stretch occupies residues 1–42 (MVDAMPENPAEEPTAASAAPNPEAVPDAVGQPEAPVKDRKVP). Residues 498 to 612 (CEVYIVEGDS…AGHVFLAQPP (115 aa)) form the Toprim domain. 3 residues coordinate Mg(2+): Glu504, Asp577, and Asp579.

It belongs to the type II topoisomerase GyrB family. Heterotetramer, composed of two GyrA and two GyrB chains. In the heterotetramer, GyrA contains the active site tyrosine that forms a transient covalent intermediate with the DNA, while GyrB binds cofactors and catalyzes ATP hydrolysis. Requires Mg(2+) as cofactor. The cofactor is Mn(2+). Ca(2+) serves as cofactor.

It localises to the cytoplasm. The enzyme catalyses ATP-dependent breakage, passage and rejoining of double-stranded DNA.. With respect to regulation, supercoiling activity inhibited by novobiocin and coumermycin, DNA wrapping around gyrase is not inhibited. Its function is as follows. A type II topoisomerase that negatively supercoils DNA in an ATP-dependent manner. About 140 bp of DNA wraps around gyrase in the presence or absence of ATP, when ATP is added negative supercoils are made. In terms of biological role, a type II topoisomerase that negatively supercoils closed circular double-stranded (ds) DNA in an ATP-dependent manner to modulate DNA topology and maintain chromosomes in an underwound state. Negative supercoiling favors strand separation, and DNA replication, transcription, recombination and repair, all of which involve strand separation. Also able to catalyze the interconversion of other topological isomers of dsDNA rings, including catenanes and knotted rings. Type II topoisomerases break and join 2 DNA strands simultaneously in an ATP-dependent manner. The polypeptide is DNA gyrase subunit B (Micrococcus luteus (strain ATCC 4698 / DSM 20030 / JCM 1464 / CCM 169 / CCUG 5858 / IAM 1056 / NBRC 3333 / NCIMB 9278 / NCTC 2665 / VKM Ac-2230) (Micrococcus lysodeikticus)).